The sequence spans 197 residues: uncharacterized protein (197 aa).

6 consecutive transmembrane segments (helical) span residues 11-31, 50-70, 79-99, 108-128, 136-156, and 158-178; these read AAMV…IPLI, ILAI…AYLG, AIVA…GLFA, AIVA…LGIM, ALKG…FIGL, and TLQI…AFHF.

Belongs to the chromate ion transporter (CHR) (TC 2.A.51) family.

Its subcellular location is the cell membrane. This is an uncharacterized protein from Bacillus subtilis (strain 168).